Consider the following 326-residue polypeptide: N-(2-amino-2-carboxyethyl)-L-glutamate synthase (326 aa).

The residue at position 47 (lysine 47) is an N6-(pyridoxal phosphate)lysine. Pyridoxal 5'-phosphate is bound by residues asparagine 77, 185-189 (STTGS), and serine 272.

The protein belongs to the cysteine synthase/cystathionine beta-synthase family. SbnA subfamily. In terms of assembly, homodimer. Requires pyridoxal 5'-phosphate as cofactor.

The enzyme catalyses O-phospho-L-serine + L-glutamate = N-[(2S)-2-amino-2-carboxyethyl]-L-glutamate + phosphate + H(+). It participates in siderophore biosynthesis. In terms of biological role, catalyzes the synthesis of N-((2S)-2-amino-2-carboxyethyl)-L-glutamate (ACEGA) from O-phospho-L-serine and L-glutamate. Involved in the biosynthesis of L-2,3-diaminopropionic acid (L-Dap), a precursor of staphyloferrin B and antibiotics. This chain is N-(2-amino-2-carboxyethyl)-L-glutamate synthase (sbnA), found in Staphylococcus aureus (strain N315).